The primary structure comprises 807 residues: 1,4-alpha-glucan branching enzyme GlgB (807 aa).

Aspartate 405 acts as the Nucleophile in catalysis. The Proton donor role is filled by glutamate 458.

Belongs to the glycosyl hydrolase 13 family. GlgB subfamily. As to quaternary structure, monomer.

It carries out the reaction Transfers a segment of a (1-&gt;4)-alpha-D-glucan chain to a primary hydroxy group in a similar glucan chain.. It functions in the pathway glycan biosynthesis; glycogen biosynthesis. Catalyzes the formation of the alpha-1,6-glucosidic linkages in glycogen by scission of a 1,4-alpha-linked oligosaccharide from growing alpha-1,4-glucan chains and the subsequent attachment of the oligosaccharide to the alpha-1,6 position. This Histophilus somni (strain 129Pt) (Haemophilus somnus) protein is 1,4-alpha-glucan branching enzyme GlgB.